Reading from the N-terminus, the 559-residue chain is Cation/calcium exchanger 2 (559 aa).

The next 13 membrane-spanning stretches (helical) occupy residues 10-30 (FGYL…GFFT), 86-106 (GFPI…FYLL), 131-151 (VAGV…ASLV), 167-187 (TVVG…SISL), 203-223 (ICFF…GKIN), 224-244 (FWGA…VVLS), 331-351 (WSKP…SFLW), 362-382 (AGVV…IAGA), 393-413 (WLLP…YISA), 416-436 (LVAL…ILGL), 480-500 (FALG…SIVI), 506-526 (LLES…VLFS), and 531-551 (LGGV…SLRI).

Belongs to the Ca(2+):cation antiporter (CaCA) (TC 2.A.19) family. Cation/calcium exchanger (CCX) subfamily.

Its subcellular location is the membrane. Its function is as follows. Membrane-localized H(+)-dependent K(+) and Na(+) transporter. The polypeptide is Cation/calcium exchanger 2 (CCX2) (Arabidopsis thaliana (Mouse-ear cress)).